The following is a 483-amino-acid chain: Protein nucleotidyltransferase YdiU (483 aa).

Residues Gly87, Gly89, Arg90, Lys110, Asp122, Gly123, Arg173, and Arg180 each coordinate ATP. The active-site Proton acceptor is Asp249. Residues Asn250 and Asp259 each coordinate Mg(2+). An ATP-binding site is contributed by Asp259.

Belongs to the SELO family. Mg(2+) is required as a cofactor. The cofactor is Mn(2+).

The enzyme catalyses L-seryl-[protein] + ATP = 3-O-(5'-adenylyl)-L-seryl-[protein] + diphosphate. It catalyses the reaction L-threonyl-[protein] + ATP = 3-O-(5'-adenylyl)-L-threonyl-[protein] + diphosphate. The catalysed reaction is L-tyrosyl-[protein] + ATP = O-(5'-adenylyl)-L-tyrosyl-[protein] + diphosphate. It carries out the reaction L-histidyl-[protein] + UTP = N(tele)-(5'-uridylyl)-L-histidyl-[protein] + diphosphate. The enzyme catalyses L-seryl-[protein] + UTP = O-(5'-uridylyl)-L-seryl-[protein] + diphosphate. It catalyses the reaction L-tyrosyl-[protein] + UTP = O-(5'-uridylyl)-L-tyrosyl-[protein] + diphosphate. In terms of biological role, nucleotidyltransferase involved in the post-translational modification of proteins. It can catalyze the addition of adenosine monophosphate (AMP) or uridine monophosphate (UMP) to a protein, resulting in modifications known as AMPylation and UMPylation. This chain is Protein nucleotidyltransferase YdiU, found in Pectobacterium carotovorum subsp. carotovorum (strain PC1).